Reading from the N-terminus, the 804-residue chain is Serine/threonine-protein kinase ATG1 (804 aa).

The 297-residue stretch at 12-308 (FTIGPEIGRG…FQEFFNDPLI (297 aa)) folds into the Protein kinase domain. ATP-binding positions include 18 to 26 (IGRGSFANV) and lysine 41. The active-site Proton acceptor is aspartate 158. Disordered stretches follow at residues 339-364 (TSPP…ERAP), 395-415 (INKS…KGAR), and 455-506 (PSPH…MPIS). Residues 404-415 (TVKDGQIKKGAR) are compositionally biased toward basic and acidic residues. Positions 462–495 (NEHSAANPSGPTETQTQRRFSPSSRTSSIGSNRR) are enriched in polar residues.

Belongs to the protein kinase superfamily. Ser/Thr protein kinase family. APG1/unc-51/ULK1 subfamily. As to quaternary structure, homodimer. Forms a ternary complex with ATG13 and ATG17.

The protein resides in the cytoplasm. Its subcellular location is the preautophagosomal structure membrane. It catalyses the reaction L-seryl-[protein] + ATP = O-phospho-L-seryl-[protein] + ADP + H(+). The catalysed reaction is L-threonyl-[protein] + ATP = O-phospho-L-threonyl-[protein] + ADP + H(+). Functionally, serine/threonine protein kinase involved in the cytoplasm to vacuole transport (Cvt) and found to be essential in autophagy, where it is required for the formation of autophagosomes. Involved in the clearance of protein aggregates which cannot be efficiently cleared by the proteasome. Required for selective autophagic degradation of the nucleus (nucleophagy) as well as for mitophagy which contributes to regulate mitochondrial quantity and quality by eliminating the mitochondria to a basal level to fulfill cellular energy requirements and preventing excess ROS production. Also involved in endoplasmic reticulum-specific autophagic process, in selective removal of ER-associated degradation (ERAD) substrates. Plays a key role in ATG9 and ATG23 cycling through the pre-autophagosomal structure and is necessary to promote ATG18 binding to ATG9 through phosphorylation of ATG9. Catalyzes phosphorylation of ATG4, decreasing the interaction between ATG4 and ATG8 and impairing deconjugation of PE-conjugated forms of ATG8. The chain is Serine/threonine-protein kinase ATG1 from Pichia angusta (Yeast).